The sequence spans 418 residues: Sialidase-3 (418 aa).

An FRIP motif motif is present at residues 24–27 (YRIP). Residues R25 and R45 each coordinate substrate. Catalysis depends on D50, which acts as the Proton acceptor. One copy of the BNR 1 repeat lies at 129–140 (LCSEDAGCSWGE). Substrate is bound by residues Y179 and Y181. One copy of the BNR 2 repeat lies at 203–214 (SDDFGVTWHHGK). Positions 223 and 243 each coordinate substrate. A BNR 3 repeat occupies 254-265 (STDSGGCFQKPT). A Phosphoserine modification is found at S312. A substrate-binding site is contributed by R339. The active-site Nucleophile is the Y369. E386 is a catalytic residue.

It belongs to the glycosyl hydrolase 33 family. Interacts with CAV1; this interaction enhances NEU3 sialidase activity within caveola. Interacts with EGFR; this interaction mediates desialylation of EGFR and enhances downstream signaling. In terms of processing, palmitoylated; may regulate intracellular trafficking and anchorage to plasma membrane and endomembranes. As to expression, expressed in heart, brain and cerebral cortex.

The protein localises to the cell membrane. Its subcellular location is the membrane. It localises to the caveola. It is found in the early endosome membrane. The protein resides in the recycling endosome membrane. The protein localises to the lysosome membrane. It carries out the reaction Hydrolysis of alpha-(2-&gt;3)-, alpha-(2-&gt;6)-, alpha-(2-&gt;8)- glycosidic linkages of terminal sialic acid residues in oligosaccharides, glycoproteins, glycolipids, colominic acid and synthetic substrates.. It catalyses the reaction a ganglioside GD1a + H2O = a ganglioside GM1 + N-acetylneuraminate. The enzyme catalyses a ganglioside GD1a (d18:1(4E)) + H2O = a ganglioside GM1 (d18:1(4E)) + N-acetylneuraminate. The catalysed reaction is a ganglioside GD1b + H2O = a ganglioside GM1 + N-acetylneuraminate. It carries out the reaction a ganglioside GD1b (d18:1(4E)) + H2O = a ganglioside GM1 (d18:1(4E)) + N-acetylneuraminate. It catalyses the reaction a ganglioside GD3 + H2O = a ganglioside GM3 + N-acetylneuraminate. The enzyme catalyses a ganglioside GD3 (d18:1(4E)) + H2O = a ganglioside GM3 (d18:1(4E)) + N-acetylneuraminate. The catalysed reaction is a ganglioside GM3 + H2O = a beta-D-galactosyl-(1-&gt;4)-beta-D-glucosyl-(1&lt;-&gt;1)-ceramide + N-acetylneuraminate. It carries out the reaction a ganglioside GM1 + H2O = a ganglioside GA1 + N-acetylneuraminate. It catalyses the reaction a ganglioside GM1 (d18:1(4E)) + H2O = a ganglioside GA1 (d18:1(4E)) + N-acetylneuraminate. The enzyme catalyses a ganglioside GM2 (d18:1(4E)) + H2O = a ganglioside GA2 (d18:1(4E)) + N-acetylneuraminate. The catalysed reaction is a ganglioside GM3 (d18:1(4E)) + H2O = a beta-D-Gal-(1-&gt;4)-beta-D-Glc-(1&lt;-&gt;1)-Cer(d18:1(4E)) + N-acetylneuraminate. It carries out the reaction a ganglioside GT1b + H2O = a ganglioside GD1b + N-acetylneuraminate. Functionally, exo-alpha-sialidase that catalyzes the hydrolytic cleavage of the terminal sialic acid (N-acetylneuraminic acid, Neu5Ac) of a glycan moiety in the catabolism of glycolipids, glycoproteins and oligosacharides. Displays high catalytic efficiency for gangliosides including alpha-(2-&gt;3)-sialylated GD1a and GM3 and alpha-(2-&gt;8)-sialylated GD3. Plays a role in the regulation of transmembrane signaling through the modulation of ganglioside content of the lipid bilayer and by direct interaction with signaling receptors, such as EGFR. Desialylates EGFR and activates downstream signaling in proliferating cells. Contributes to clathrin-mediated endocytosis by regulating sorting of endocytosed receptors to early and recycling endosomes. The chain is Sialidase-3 (Neu3) from Mus musculus (Mouse).